Here is a 137-residue protein sequence, read N- to C-terminus: Small ribosomal subunit protein uS9 (137 aa).

The segment at 104–137 is disordered; sequence PLKSEGYLTRDPRAKERKKYGLHKARKAPQYSKR. Residues 118–137 are compositionally biased toward basic residues; it reads KERKKYGLHKARKAPQYSKR.

It belongs to the universal ribosomal protein uS9 family.

This Gloeothece citriformis (strain PCC 7424) (Cyanothece sp. (strain PCC 7424)) protein is Small ribosomal subunit protein uS9.